We begin with the raw amino-acid sequence, 561 residues long: Centromere protein T (561 aa).

Residues 1–83 are disordered; the sequence is MADHNPDSDS…HIQASGHLEE (83 aa). Over residues 18-27 the composition is skewed to basic and acidic residues; the sequence is RVLDTADPRT. The segment covering 34 to 46 has biased composition (low complexity); that stretch reads ARAGARRALLETA. At Ser47 the chain carries Phosphoserine. Thr85 carries the post-translational modification Phosphothreonine. The flexible stalk domain stretch occupies residues 93–421; it reads ILLTAPESSI…RHHQFLEPAP (329 aa). 2 disordered regions span residues 256-292 and 333-457; these read HSLPCTPHTGAEDAEQAAGRKTQSSGPGLQKNSPGKP and AEKK…DPHK. Positions 276 to 288 are enriched in polar residues; sequence KTQSSGPGLQKNS. Phosphoserine is present on residues Ser343, Ser345, and Ser356. Residues 357 to 367 show a composition bias toward basic and acidic residues; sequence RVEEAEGHTEV. Ser373, Ser385, Ser386, and Ser397 each carry phosphoserine. Low complexity predominate over residues 395–407; the sequence is AASPESASSTPES.

Belongs to the CENP-T/CNN1 family. As to quaternary structure, component of the CENPA-CAD complex, composed of CENPI, CENPK, CENPL, CENPO, CENPP, CENPQ, CENPR and CENPS. The CENPA-CAD complex is probably recruited on centromeres by the CENPA-NAC complex, at least composed of CENPA, CENPC, CENPH, CENPM, CENPN, CENPT and CENPU. Identified in a centromeric complex containing histones H2A, H2B, H3 and H4, and at least CENPA, CENPB, CENPC, CENPT, CENPN, HJURP, SUPT16H, SSRP1 and RSF1. Interacts (via N-terminus) with the NDC80 complex. Heterodimer with CENPW; this dimer coassembles with CENPS-CENPX heterodimers at centromeres to form the tetrameric CENP-T-W-S-X complex. In terms of processing, dynamically phosphorylated at Ser-47 and probably also other sites during the cell cycle. Phosphorylated at Ser-47 during G2 phase, metaphase and anaphase, but not during telophase or G1 phase.

The protein localises to the nucleus. It localises to the chromosome. Its subcellular location is the centromere. It is found in the kinetochore. Component of the CENPA-NAC (nucleosome-associated) complex, a complex that plays a central role in assembly of kinetochore proteins, mitotic progression and chromosome segregation. The CENPA-NAC complex recruits the CENPA-CAD (nucleosome distal) complex and may be involved in incorporation of newly synthesized CENPA into centromeres. Part of a nucleosome-associated complex that binds specifically to histone H3-containing nucleosomes at the centromere, as opposed to nucleosomes containing CENPA. Component of the heterotetrameric CENP-T-W-S-X complex that binds and supercoils DNA, and plays an important role in kinetochore assembly. CENPT has a fundamental role in kinetochore assembly and function. It is one of the inner kinetochore proteins, with most further proteins binding downstream. Required for normal chromosome organization and normal progress through mitosis. In Homo sapiens (Human), this protein is Centromere protein T (CENPT).